The sequence spans 790 residues: Transient receptor potential cation channel subfamily V member 3 (790 aa).

Residues 1-430 lie on the Cytoplasmic side of the membrane; sequence MKAHPKEMVP…TLEPLHTLLH (430 aa). Disordered regions lie at residues 15-34, 52-71, and 76-112; these read RVAA…PAEI, PNPT…MDSN, and ISGN…KEEQ. Residues 95 to 105 show a composition bias toward polar residues; that stretch reads ETPSNPNSPSA. ANK repeat units lie at residues 117–148, 170–198, 214–243, 261–291, 298–330, 340–362, and 398–420; these read RRLK…LCRR, TCLM…EEND, EGQT…DVNA, FGET…DITS, NILH…RSGN, DGLT…YILS, and TTDN…HEML. The helical transmembrane segment at 431 to 460 threads the bilayer; it reads MKWKKFAKHMFFLSFCFYFFYNITLTLVSY. At 461 to 479 the chain is on the extracellular side; it reads YRPREEEAIPHPLALTHKM. A helical membrane pass occupies residues 480-508; sequence GWLQLLGRMFVLIWAMCISVKEGIAIFLL. The Cytoplasmic portion of the chain corresponds to 509–519; the sequence is RPSDLQSILSD. A helical membrane pass occupies residues 520-540; it reads AWFHFVFFIQAVLVILSVFLY. Residues 541–545 are Extracellular-facing; the sequence is LFAYK. Residues 546–566 form a helical membrane-spanning segment; it reads EYLACLVLAMALGWANMLYYT. Topologically, residues 567–569 are cytoplasmic; the sequence is RGF. Residues 570–608 traverse the membrane as a helical segment; that stretch reads QSMGMYSVMIQKVILHDVLKFLFVYIVFLLGFGVALASL. Residues 609 to 620 are Extracellular-facing; the sequence is IEKCPKDNKDCS. An intramembrane region (pore-forming) is located at residues 621–646; the sequence is SYGSFSDAVLELFKLTIGLGDLNIQQ. Gly638 lines the Na(+) pocket. At 647–649 the chain is on the extracellular side; that stretch reads NSK. Residues 650-686 traverse the membrane as a helical segment; sequence YPILFLFLLITYVILTFVLLLNMLIALMGETVENVSK. Residues 687-790 lie on the Cytoplasmic side of the membrane; sequence ESERIWRLQR…EVEEFPETSV (104 aa).

It belongs to the transient receptor (TC 1.A.4) family. TrpV subfamily. TRPV3 sub-subfamily. In terms of assembly, homotetramer. May convert from a homotetramer to a homopentamer to allow pore dilation. Interacts with TRPV1; may form a heteromeric channel with TRPV1. Interacts with SNX11; this interaction promotes TRPV3 trafficking from the cell membrane to lysosome for degradation. In terms of tissue distribution, abundantly expressed in CNS. Widely expressed at low levels. Detected in dorsal root ganglion (at protein level). Expressed in the keratinocyte layers of the outer root sheath and, to lesser extent, to the matrix of the hair follicles (at protein level).

The protein localises to the cell membrane. Its subcellular location is the cytoplasm. It localises to the lysosome. It carries out the reaction Ca(2+)(in) = Ca(2+)(out). It catalyses the reaction Mg(2+)(in) = Mg(2+)(out). The enzyme catalyses Na(+)(in) = Na(+)(out). The catalysed reaction is K(+)(in) = K(+)(out). With respect to regulation, activated by cannabinoid that binds to the vanilloid binding pocket. Diphenylboronic anhydride induces pore dilation and enhances cation permeability by promoting the conversion to a homopentamer. Its function is as follows. Non-selective calcium permeant cation channel. It is activated by innocuous (warm) temperatures and shows an increased response at noxious temperatures greater than 39 degrees Celsius. Activation exhibits an outward rectification. The channel pore can dilate to provide permeability to larger cations. May associate with TRPV1 and may modulate its activity. Is a negative regulator of hair growth and cycling: TRPV3-coupled signaling suppresses keratinocyte proliferation in hair follicles and induces apoptosis and premature hair follicle regression (catagen). This is Transient receptor potential cation channel subfamily V member 3 (TRPV3) from Homo sapiens (Human).